The chain runs to 358 residues: DNA polymerase IV (358 aa).

The UmuC domain maps to 4–185 (IIHVDMDCFY…LPLIKIPGVG (182 aa)). Mg(2+) contacts are provided by D8 and D103. E104 is a catalytic residue.

Belongs to the DNA polymerase type-Y family. Monomer. It depends on Mg(2+) as a cofactor.

Its subcellular location is the cytoplasm. The catalysed reaction is DNA(n) + a 2'-deoxyribonucleoside 5'-triphosphate = DNA(n+1) + diphosphate. In terms of biological role, poorly processive, error-prone DNA polymerase involved in untargeted mutagenesis. Copies undamaged DNA at stalled replication forks, which arise in vivo from mismatched or misaligned primer ends. These misaligned primers can be extended by PolIV. Exhibits no 3'-5' exonuclease (proofreading) activity. May be involved in translesional synthesis, in conjunction with the beta clamp from PolIII. This chain is DNA polymerase IV, found in Shewanella halifaxensis (strain HAW-EB4).